Reading from the N-terminus, the 299-residue chain is tRNA dimethylallyltransferase (299 aa).

13-20 (GPTASGKT) serves as a coordination point for ATP. Position 15 to 20 (15 to 20 (TASGKT)) interacts with substrate. The interaction with substrate tRNA stretch occupies residues 38–41 (DSRQ).

The protein belongs to the IPP transferase family. Monomer. Mg(2+) is required as a cofactor.

The enzyme catalyses adenosine(37) in tRNA + dimethylallyl diphosphate = N(6)-dimethylallyladenosine(37) in tRNA + diphosphate. Functionally, catalyzes the transfer of a dimethylallyl group onto the adenine at position 37 in tRNAs that read codons beginning with uridine, leading to the formation of N6-(dimethylallyl)adenosine (i(6)A). This Prochlorococcus marinus (strain MIT 9313) protein is tRNA dimethylallyltransferase.